Reading from the N-terminus, the 174-residue chain is Myeloid-derived growth factor (174 aa).

The first 32 residues, 1–32, serve as a signal peptide directing secretion; that stretch reads MAAPSGRRNGSGGANLWVSLLLAAAALRPVET.

Belongs to the MYDGF family.

It is found in the secreted. It localises to the endoplasmic reticulum-Golgi intermediate compartment. Its subcellular location is the endoplasmic reticulum. The protein resides in the golgi apparatus. Functionally, bone marrow-derived monocyte and paracrine-acting protein that promotes cardiac myocyte survival and adaptive angiogenesis for cardiac protection and/or repair after myocardial infarction (MI). Stimulates endothelial cell proliferation through a MAPK1/3-, STAT3- and CCND1-mediated signaling pathway. Inhibits cardiac myocyte apoptosis in a PI3K/AKT-dependent signaling pathway. This chain is Myeloid-derived growth factor, found in Bos taurus (Bovine).